A 404-amino-acid chain; its full sequence is Probable sugar efflux transporter (404 aa).

12 consecutive transmembrane segments (helical) span residues Val15–Leu35, Gly51–Leu71, Leu85–Val105, Ile109–Val129, Gln137–Gly157, Ala168–Leu188, Pro209–Tyr229, Ser245–Phe265, Phe276–Gln296, Trp299–Leu319, Val333–Gly353, and Ala363–Val383.

Belongs to the major facilitator superfamily. SotB (TC 2.A.1.2) family.

The protein localises to the cell inner membrane. In terms of biological role, involved in the efflux of sugars. The physiological role may be the reduction of the intracellular concentration of toxic sugars or sugar metabolites. In Pasteurella multocida (strain Pm70), this protein is Probable sugar efflux transporter.